Consider the following 264-residue polypeptide: COP9 signalosome complex subunit 7b (264 aa).

Alanine 2 is modified (N-acetylalanine). One can recognise a PCI domain in the interval 2–159 (AGEQKPSSNL…QLLEVDFCIG (158 aa)). A coiled-coil region spans residues 194–237 (RANQYKENHHRTQQQVEAEVSNIKKTLKATASSSAQEMEQQLAE). Residues 223 to 232 (TASSSAQEME) are compositionally biased toward polar residues. The disordered stretch occupies residues 223–264 (TASSSAQEMEQQLAERECPPHTEQRQPTKKMSKVKGLVSSRH). Residues 235 to 248 (LAERECPPHTEQRQ) show a composition bias toward basic and acidic residues.

Belongs to the CSN7/EIF3M family. CSN7 subfamily. Component of the CSN complex, composed of COPS1/GPS1, COPS2, COPS3, COPS4, COPS5, COPS6, COPS7 (COPS7A or COPS7B) and COPS8 and COPS9. In the complex, it probably interacts directly with COPS1, COPS2, COPS4, COPS5, COPS6 and COPS8. Interacts with EIF3S6.

It is found in the cytoplasm. Its subcellular location is the nucleus. In terms of biological role, component of the COP9 signalosome complex (CSN), a complex involved in various cellular and developmental processes. The CSN complex is an essential regulator of the ubiquitin (Ubl) conjugation pathway by mediating the deneddylation of the cullin subunits of SCF-type E3 ligase complexes, leading to decrease the Ubl ligase activity of SCF-type complexes such as SCF, CSA or DDB2. The complex is also involved in phosphorylation of p53/TP53, JUN, I-kappa-B-alpha/NFKBIA, ITPK1 and IRF8/ICSBP, possibly via its association with CK2 and PKD kinases. CSN-dependent phosphorylation of TP53 and JUN promotes and protects degradation by the Ubl system, respectively. The protein is COP9 signalosome complex subunit 7b (Cops7b) of Mus musculus (Mouse).